Reading from the N-terminus, the 252-residue chain is Neurexophilin-3 (252 aa).

The signal sequence occupies residues 1 to 22 (MQLTRCCFVFLVQGSLYLVICG). The interval 23-75 (QDDGPPGSEDPERDDHEGQPRPRVPRKRGHISPKSRPMANSTLLGLLAPPGEA) is II. The segment at 27–58 (PPGSEDPERDDHEGQPRPRVPRKRGHISPKSR) is disordered. Basic residues predominate over residues 45 to 55 (RVPRKRGHISP). 4 N-linked (GlcNAc...) asparagine glycosylation sites follow: Asn-62, Asn-127, Asn-137, and Asn-143. The tract at residues 76 to 157 (WGILGQPPNR…LVPPSKAVEF (82 aa)) is III. An IV (linker domain) region spans residues 158–166 (HQEQQIFIE). The v (Cys-rich) stretch occupies residues 167-252 (AKASKIFNCR…HSDTPYYPSG (86 aa)).

It belongs to the neurexophilin family. In terms of processing, may be proteolytically processed at the boundary between the N-terminal non-conserved and the central conserved domain in neuron-like cells. In terms of tissue distribution, highest level in brain.

The protein localises to the secreted. In terms of biological role, may be signaling molecules that resemble neuropeptides. Ligand for alpha-neurexins. In Homo sapiens (Human), this protein is Neurexophilin-3 (NXPH3).